The sequence spans 247 residues: Ubiquinone biosynthesis O-methyltransferase (247 aa).

Residues Arg41, Gly72, Asp93, and Met136 each contribute to the S-adenosyl-L-methionine site.

Belongs to the methyltransferase superfamily. UbiG/COQ3 family.

The enzyme catalyses a 3-demethylubiquinol + S-adenosyl-L-methionine = a ubiquinol + S-adenosyl-L-homocysteine + H(+). The catalysed reaction is a 3-(all-trans-polyprenyl)benzene-1,2-diol + S-adenosyl-L-methionine = a 2-methoxy-6-(all-trans-polyprenyl)phenol + S-adenosyl-L-homocysteine + H(+). Its pathway is cofactor biosynthesis; ubiquinone biosynthesis. Its function is as follows. O-methyltransferase that catalyzes the 2 O-methylation steps in the ubiquinone biosynthetic pathway. The chain is Ubiquinone biosynthesis O-methyltransferase from Bartonella quintana (strain Toulouse) (Rochalimaea quintana).